Reading from the N-terminus, the 210-residue chain is GTP pyrophosphokinase YwaC (210 aa).

It belongs to the RelA/SpoT family. As to quaternary structure, homotetramer.

It catalyses the reaction GTP + ATP = guanosine 3'-diphosphate 5'-triphosphate + AMP. Its pathway is purine metabolism; ppGpp biosynthesis; ppGpp from GTP: step 1/2. Its function is as follows. Functions as a (p)ppGpp synthase; GDP can be used instead of GTP, resulting in an increase of (p)ppGpp synthesis. Overexpression in relA mutants (triple relA-yjbM-ywaC deletions and single relA deletions) leads to growth arrest; GTP levels fall drastically, various guanine-related nucleotides are synthesized (ppGp or pGpp), the cellular transcriptional profile changes dramatically and 70S ribosome dimerization occurs. Overexpression in the presence of a wild-type relA gene does not have these effects. In eubacteria ppGpp (guanosine 3'-diphosphate 5'-diphosphate) is a mediator of the stringent response that coordinates a variety of cellular activities in response to changes in nutritional abundance. activities in response to changes in nutritional abundance. YwaC has probably a minor role in stringent response. This is GTP pyrophosphokinase YwaC (ywaC) from Bacillus subtilis (strain 168).